The chain runs to 1230 residues: Cullin-associated NEDD8-dissociated protein 1 (1230 aa).

Ala-2 carries the post-translational modification N-acetylalanine. HEAT repeat units follow at residues 2–39 (ASAS…KDSI), 44–81 (DSER…KVKE), 83–119 (QVET…ELPP), 131–165 (CKKI…LSRQ), 171–208 (NFHP…SCGN), 210–247 (VFVD…QAGH), 248–282 (RIGE…FESF), 289–366 (EVYP…TRHE), 370–407 (EFYK…QTRP), 424–467 (PLTM…VLPG), 471–510 (QHIP…NHSP), and 515–552 (PHVQ…VIRP). Lys-55 carries the N6-acetyllysine modification. Residues 315–344 (DEDEDENAMDADGGDDDDQGSDDEYSDDDD) form a disordered region. Residue Ser-335 is modified to Phosphoserine. Ser-558 carries the phosphoserine modification. HEAT repeat units lie at residues 563-602 (PYIK…NLGD), 606-643 (SDLP…LKID), 646-683 (PVLG…NYSD), 688-725 (AMID…VYPS), 729-768 (KISG…TGTN), 770-808 (LGYM…ALTR), 809-845 (ACPK…LGEV), 852-889 (SGQL…GNLP), 890-927 (EYLP…GLKP), 928-960 (YVEN…KLTL), 961-998 (IDPE…DHPQ), 1002-1039 (PLLK…NKPS), 1043-1097 (DLLD…DSCL), 1099-1133 (RLDI…LSTL), and 1140-1189 (QRLD…IPEA). Lys-971 is subject to N6-acetyllysine.

It belongs to the CAND family. Interacts with TBP. Part of a complex that contains CUL1 and RBX1. Interacts with unneddylated cullins: interacts with CUL1, CUL2, CUL3, CUL4A, CUL4B and CUL5. Does not bind neddylated CUL1. Interaction with cullins is abolished in presence of COMMD1, which antagonizes with CAND1 for interacting with cullins. Interacts with ERCC6. Interacts with DCUN1D1, DCUN1D2, DCUN1D3, DCUN1D4 and DCUN1D5; these interactions are bridged by cullins and strongly inhibits the neddylation of cullins.

The protein localises to the cytoplasm. Its subcellular location is the nucleus. Its function is as follows. Key assembly factor of SCF (SKP1-CUL1-F-box protein) E3 ubiquitin ligase complexes that promotes the exchange of the substrate-recognition F-box subunit in SCF complexes, thereby playing a key role in the cellular repertoire of SCF complexes. Acts as a F-box protein exchange factor. The exchange activity of CAND1 is coupled with cycles of neddylation conjugation: in the deneddylated state, cullin-binding CAND1 binds CUL1-RBX1, increasing dissociation of the SCF complex and promoting exchange of the F-box protein. Probably plays a similar role in other cullin-RING E3 ubiquitin ligase complexes. The sequence is that of Cullin-associated NEDD8-dissociated protein 1 (CAND1) from Bos taurus (Bovine).